Consider the following 460-residue polypeptide: GTPase Der (460 aa).

EngA-type G domains are found at residues 2-164 and 196-368; these read QSII…HEEF and IRVG…ENFT. GTP contacts are provided by residues 8 to 15, 55 to 59, 116 to 119, 202 to 209, 249 to 253, and 313 to 316; these read GKPNVGKS, DSGGL, NKVD, GRVNVGKS, DTAGI, and NKWD. Positions 369 to 453 constitute a KH-like domain; that stretch reads QKIQTSKLNT…PLVIASRKKG (85 aa).

Belongs to the TRAFAC class TrmE-Era-EngA-EngB-Septin-like GTPase superfamily. EngA (Der) GTPase family. Associates with the 50S ribosomal subunit.

Its function is as follows. GTPase that plays an essential role in the late steps of ribosome biogenesis. This chain is GTPase Der, found in Campylobacter jejuni subsp. jejuni serotype O:6 (strain 81116 / NCTC 11828).